Reading from the N-terminus, the 672-residue chain is Poly-beta-1,6-N-acetyl-D-glucosamine N-deacetylase (672 aa).

Positions 1–20 are cleaved as a signal peptide; sequence MLRNGNKYLLMLVSIIMLTA. Cys-21 is lipidated: N-palmitoyl cysteine. A lipid anchor (S-diacylglycerol cysteine) is attached at Cys-21. One can recognise a NodB homology domain in the interval 107-349; the sequence is KAVVLTFDDG…IQRVKDMQIS (243 aa).

It belongs to the polysaccharide deacetylase family.

The protein resides in the cell outer membrane. Its function is as follows. Catalyzes the N-deacetylation of poly-beta-1,6-N-acetyl-D-glucosamine (PGA), a biofilm adhesin polysaccharide. N-deacetylation promotes PGA export through the PgaA porin. This is Poly-beta-1,6-N-acetyl-D-glucosamine N-deacetylase (pgaB) from Escherichia coli O157:H7.